The primary structure comprises 182 residues: MSEAPKKRWYVVQAFSGFEGRVAQSLREHIKMHGMEELFGEVLVPTEEVVEMRAGQRRKSERKFFPGYVLVQMIMNDESWHLVRSVPRVMGFIGGTSDRPAPITDKEADAILNRLEKASEAPRPKTMFEAGEVVRVNDGPFADFNGTVEEVDYEKSRLKVSVSIFGRATPVELEFGQVEKLD.

Residues 131–161 (GEVVRVNDGPFADFNGTVEEVDYEKSRLKVS) enclose the KOW domain.

Belongs to the NusG family.

Participates in transcription elongation, termination and antitermination. The chain is Transcription termination/antitermination protein NusG from Vibrio cholerae serotype O1 (strain ATCC 39315 / El Tor Inaba N16961).